A 538-amino-acid chain; its full sequence is MTYSIGIDYGTASGRVFLVDTTNGEIISTYIKEYPHGTISESLNGTELPHNYFLQHAADYTSILEEGVQYVLKDSQVDPKSIIGIGIDFTSCTIVFLDDDFKPLHLHPDLEDQPHAYVKLWKHHGAQDEATYMKQVSDKVNPSWLNFYGHNVNSEWMIPKILEVKNKAPEVLERSAYIMEAGDYLVSLLTDKNIRSNCGIGFKGFYNETDGFNYSFFEAIDQELPEIVKTKCESPVVNIGESAGSLSPYYQNLWGLTEQVQISPYIIDAHSGVLGVGAIEQGEFTPVIGTSTCHLMLDPKQEPIPAITGSVKDAIIPGLYAYEAGQAAVGDLFNYSASLAPKSYVDQAEKQGLSILGYLEKLAADISIDKQHVTVLDWHNGNRSILSDSKLTGSIFGLTLQTPFEMIHKAYLESTAFGTKMIMQQFENNHIPVETVYAAGGIPIKSELLVDIYANVLNKEVVVIDSSNATALGAAMLGANVGGAYPTLKETVKHMKQPVYYRKQPEAKKVKQYALLFDRYKALHDLLGKEYPQLSYIN.

It belongs to the ribulokinase family.

The catalysed reaction is D-ribulose + ATP = D-ribulose 5-phosphate + ADP + H(+). It catalyses the reaction L-ribulose + ATP = L-ribulose 5-phosphate + ADP + H(+). The protein operates within carbohydrate degradation; L-arabinose degradation via L-ribulose; D-xylulose 5-phosphate from L-arabinose (bacterial route): step 2/3. The polypeptide is Ribulokinase 1 (Staphylococcus saprophyticus subsp. saprophyticus (strain ATCC 15305 / DSM 20229 / NCIMB 8711 / NCTC 7292 / S-41)).